Here is a 468-residue protein sequence, read N- to C-terminus: UDP-N-acetylmuramate--L-alanine ligase (468 aa).

ATP is bound at residue 117 to 123 (GTHGKTT).

The protein belongs to the MurCDEF family.

It localises to the cytoplasm. It catalyses the reaction UDP-N-acetyl-alpha-D-muramate + L-alanine + ATP = UDP-N-acetyl-alpha-D-muramoyl-L-alanine + ADP + phosphate + H(+). The protein operates within cell wall biogenesis; peptidoglycan biosynthesis. Cell wall formation. In Maricaulis maris (strain MCS10) (Caulobacter maris), this protein is UDP-N-acetylmuramate--L-alanine ligase.